The primary structure comprises 460 residues: tRNA modification GTPase MnmE (460 aa).

R22, E87, and R126 together coordinate (6S)-5-formyl-5,6,7,8-tetrahydrofolate. The region spanning 222-381 (GLKTAIIGKP…LENTIYNLVF (160 aa)) is the TrmE-type G domain. N232 lines the K(+) pocket. Residues 232-237 (NVGKSS), 251-257 (TDIPGTT), and 276-279 (DTAG) contribute to the GTP site. S236 serves as a coordination point for Mg(2+). T251, I253, and T256 together coordinate K(+). T257 is a binding site for Mg(2+). K460 lines the (6S)-5-formyl-5,6,7,8-tetrahydrofolate pocket.

The protein belongs to the TRAFAC class TrmE-Era-EngA-EngB-Septin-like GTPase superfamily. TrmE GTPase family. As to quaternary structure, homodimer. Heterotetramer of two MnmE and two MnmG subunits. The cofactor is K(+).

It localises to the cytoplasm. In terms of biological role, exhibits a very high intrinsic GTPase hydrolysis rate. Involved in the addition of a carboxymethylaminomethyl (cmnm) group at the wobble position (U34) of certain tRNAs, forming tRNA-cmnm(5)s(2)U34. The sequence is that of tRNA modification GTPase MnmE from Thermoanaerobacter sp. (strain X514).